A 604-amino-acid polypeptide reads, in one-letter code: Phenylalanine--tRNA ligase beta subunit (604 aa).

A B5 domain is found at 327 to 402 (YFQEKREVAH…LGRTLDRFSP (76 aa)). The Mg(2+) site is built by Asp380, Asp386, Glu389, and Glu390.

Belongs to the phenylalanyl-tRNA synthetase beta subunit family. Type 2 subfamily. As to quaternary structure, tetramer of two alpha and two beta subunits. It depends on Mg(2+) as a cofactor.

It localises to the cytoplasm. It catalyses the reaction tRNA(Phe) + L-phenylalanine + ATP = L-phenylalanyl-tRNA(Phe) + AMP + diphosphate + H(+). The protein is Phenylalanine--tRNA ligase beta subunit of Treponema pallidum subsp. pallidum (strain SS14).